A 205-amino-acid chain; its full sequence is dITP/XTP pyrophosphatase (205 aa).

Position 7–12 (7–12 (SNNRGK)) interacts with substrate. Mg(2+) is bound by residues Glu-39 and Asp-68. Catalysis depends on Asp-68, which acts as the Proton acceptor. Substrate-binding positions include Ala-69, 154–157 (FGFD), Lys-177, and 182–183 (HR).

It belongs to the HAM1 NTPase family. As to quaternary structure, homodimer. It depends on Mg(2+) as a cofactor.

The catalysed reaction is XTP + H2O = XMP + diphosphate + H(+). The enzyme catalyses dITP + H2O = dIMP + diphosphate + H(+). It carries out the reaction ITP + H2O = IMP + diphosphate + H(+). Functionally, pyrophosphatase that catalyzes the hydrolysis of nucleoside triphosphates to their monophosphate derivatives, with a high preference for the non-canonical purine nucleotides XTP (xanthosine triphosphate), dITP (deoxyinosine triphosphate) and ITP. Seems to function as a house-cleaning enzyme that removes non-canonical purine nucleotides from the nucleotide pool, thus preventing their incorporation into DNA/RNA and avoiding chromosomal lesions. This is dITP/XTP pyrophosphatase from Acidovorax ebreus (strain TPSY) (Diaphorobacter sp. (strain TPSY)).